A 741-amino-acid polypeptide reads, in one-letter code: Cysteine--tRNA ligase, cytoplasmic (741 aa).

Cys-46 contributes to the Zn(2+) binding site. The 'HIGH' region motif lies at 48-58; it reads PTVYDASHMGH. Ser-297 carries the phosphoserine modification. Zn(2+)-binding residues include Cys-340, His-365, and Glu-369. The short motif at 398-402 is the 'KMSKS' region element; that stretch reads KMSKS. An ATP-binding site is contributed by Lys-401. The segment at 697 to 718 is disordered; it reads FDENGLPTHDKEGKEVSKGQIK. The span at 704–713 shows a compositional bias: basic and acidic residues; sequence THDKEGKEVS.

The protein belongs to the class-I aminoacyl-tRNA synthetase family. It depends on Zn(2+) as a cofactor.

The protein resides in the cytoplasm. It carries out the reaction tRNA(Cys) + L-cysteine + ATP = L-cysteinyl-tRNA(Cys) + AMP + diphosphate. This is Cysteine--tRNA ligase, cytoplasmic from Drosophila melanogaster (Fruit fly).